We begin with the raw amino-acid sequence, 516 residues long: ADP-ribosylation factor GTPase-activating protein 3 (516 aa).

The Arf-GAP domain maps to 10–126 (LTIFKRLRSV…IKSLASQATR (117 aa)). Residues 25-48 (CFDCGAKNPSWASITYGVFLCIDC) form a C4-type zinc finger. Residues 170–199 (AEPSSLTSRPAETTLENNEGGQEQGPCVEG) are disordered. The span at 173-190 (SSLTSRPAETTLENNEGG) shows a compositional bias: polar residues. S231 bears the Phosphoserine mark. A coiled-coil region spans residues 243 to 264 (NEIEKQAQAADKMKEQEDLAKA). Phosphoserine is present on residues S270, S274, S331, and S370. The disordered stretch occupies residues 393-417 (TTGYSDRPTARHKPDYEPVENTDEA). Residues S428, S451, S453, S455, S457, and S458 each carry the phosphoserine modification.

The protein resides in the cytoplasm. It localises to the golgi apparatus membrane. GAP activity stimulated by phosphatidylinositol 4,5-bisphosphate (PIP2). In terms of biological role, GTPase-activating protein (GAP) for ADP ribosylation factor 1 (ARF1). Hydrolysis of ARF1-bound GTP may lead to dissociation of coatomer from Golgi-derived membranes to allow fusion with target membranes. In Pongo abelii (Sumatran orangutan), this protein is ADP-ribosylation factor GTPase-activating protein 3.